Reading from the N-terminus, the 254-residue chain is Alcohol dehydrogenase (254 aa).

9–32 is a binding site for NAD(+); that stretch reads IFVAGLGGIGLDTSRELVKRDLKN. Substrate is bound at residue S138. The active-site Proton acceptor is the Y151.

Belongs to the short-chain dehydrogenases/reductases (SDR) family. In terms of assembly, homodimer.

It carries out the reaction a primary alcohol + NAD(+) = an aldehyde + NADH + H(+). The catalysed reaction is a secondary alcohol + NAD(+) = a ketone + NADH + H(+). In Drosophila paulistorum (Fruit fly), this protein is Alcohol dehydrogenase (Adh).